A 581-amino-acid chain; its full sequence is Proline--tRNA ligase (581 aa).

It belongs to the class-II aminoacyl-tRNA synthetase family. ProS type 1 subfamily. Homodimer.

The protein resides in the cytoplasm. The catalysed reaction is tRNA(Pro) + L-proline + ATP = L-prolyl-tRNA(Pro) + AMP + diphosphate. Catalyzes the attachment of proline to tRNA(Pro) in a two-step reaction: proline is first activated by ATP to form Pro-AMP and then transferred to the acceptor end of tRNA(Pro). As ProRS can inadvertently accommodate and process non-cognate amino acids such as alanine and cysteine, to avoid such errors it has two additional distinct editing activities against alanine. One activity is designated as 'pretransfer' editing and involves the tRNA(Pro)-independent hydrolysis of activated Ala-AMP. The other activity is designated 'posttransfer' editing and involves deacylation of mischarged Ala-tRNA(Pro). The misacylated Cys-tRNA(Pro) is not edited by ProRS. This chain is Proline--tRNA ligase, found in Polaromonas naphthalenivorans (strain CJ2).